We begin with the raw amino-acid sequence, 195 residues long: Insertion element IS136 uncharacterized protein Atu4601 (195 aa).

The Integrase catalytic domain occupies 25–194; the sequence is MVMRSNLRWC…SPRQFIRAKS (170 aa).

The chain is Insertion element IS136 uncharacterized protein Atu4601 from Agrobacterium fabrum (strain C58 / ATCC 33970) (Agrobacterium tumefaciens (strain C58)).